Reading from the N-terminus, the 267-residue chain is tRNA pseudouridine synthase A (267 aa).

The active-site Nucleophile is aspartate 52. Position 113 (tyrosine 113) interacts with substrate.

Belongs to the tRNA pseudouridine synthase TruA family. In terms of assembly, homodimer.

It catalyses the reaction uridine(38/39/40) in tRNA = pseudouridine(38/39/40) in tRNA. Functionally, formation of pseudouridine at positions 38, 39 and 40 in the anticodon stem and loop of transfer RNAs. This Chlamydia pneumoniae (Chlamydophila pneumoniae) protein is tRNA pseudouridine synthase A.